Consider the following 416-residue polypeptide: Glutamyl-tRNA reductase (416 aa).

Residues 50–53 (TCNR), S109, 114–116 (EPQ), and Q120 contribute to the substrate site. Residue C51 is the Nucleophile of the active site. An NADP(+)-binding site is contributed by 189–194 (GAGEMI).

This sequence belongs to the glutamyl-tRNA reductase family. As to quaternary structure, homodimer.

It carries out the reaction (S)-4-amino-5-oxopentanoate + tRNA(Glu) + NADP(+) = L-glutamyl-tRNA(Glu) + NADPH + H(+). Its pathway is porphyrin-containing compound metabolism; protoporphyrin-IX biosynthesis; 5-aminolevulinate from L-glutamyl-tRNA(Glu): step 1/2. Functionally, catalyzes the NADPH-dependent reduction of glutamyl-tRNA(Glu) to glutamate 1-semialdehyde (GSA). This is Glutamyl-tRNA reductase from Vesicomyosocius okutanii subsp. Calyptogena okutanii (strain HA).